Here is a 145-residue protein sequence, read N- to C-terminus: Putative transcriptional regulatory protein PYRAB13000 (145 aa).

Belongs to the Tfx family.

Putative transcriptional regulator. This is Putative transcriptional regulatory protein PYRAB13000 from Pyrococcus abyssi (strain GE5 / Orsay).